The sequence spans 207 residues: Small ribosomal subunit protein uS4 (207 aa).

Residues 31 to 54 form a disordered region; the sequence is KSKFETKPGQHGRTSGSRTSDFGL. Residues 42 to 52 show a composition bias toward polar residues; it reads GRTSGSRTSDF. The S4 RNA-binding domain occupies 97–158; that stretch reads SRLDNVVYRM…KAKKQLRVTE (62 aa).

The protein belongs to the universal ribosomal protein uS4 family. As to quaternary structure, part of the 30S ribosomal subunit. Contacts protein S5. The interaction surface between S4 and S5 is involved in control of translational fidelity.

In terms of biological role, one of the primary rRNA binding proteins, it binds directly to 16S rRNA where it nucleates assembly of the body of the 30S subunit. Functionally, with S5 and S12 plays an important role in translational accuracy. This is Small ribosomal subunit protein uS4 from Methylibium petroleiphilum (strain ATCC BAA-1232 / LMG 22953 / PM1).